A 78-amino-acid chain; its full sequence is MISKDDIRAILAEGTDLGPPEQFPDDADVVMDSFTLIVLQHGLEERHGVVIDPHFEDMEQFTSIDGIHAYLTALPAER.

At Ser33 the chain carries O-(pantetheine 4'-phosphoryl)serine.

This sequence belongs to the acyl carrier protein (ACP) family. 4'-phosphopantetheine is transferred from CoA to a specific serine of the apo-form of this carrier protein.

It functions in the pathway antibiotic biosynthesis. Its function is as follows. Involved in the biosynthesis of actinomycin. Acts as a carrier in the transfer and thioesterification of 4-methyl-3-hydroxyanthranilic acid (4-MHA). In Streptomyces anulatus (Streptomyces chrysomallus), this protein is 4-methyl-3-hydroxyanthranilic acid carrier protein.